The primary structure comprises 447 residues: Dual specificity protein phosphatase CDC14C (447 aa).

Positions 14–168 are a; it reads PQDDVYVDIT…AMQYGFLNFN (155 aa). The tract at residues 169-182 is linker; it reads SFNLDEYEHYEKAE. A b region spans residues 183–349; it reads NGDLNWIIPD…EGDYFRQRLK (167 aa). The Tyrosine-protein phosphatase domain maps to 184–344; that stretch reads GDLNWIIPDR…TSLWLEGDYF (161 aa). The active-site Phosphocysteine intermediate is Cys284. A helical transmembrane segment spans residues 426-446; that stretch reads FTLCSVVIWWIVCDYILPILL.

It belongs to the protein-tyrosine phosphatase family. Non-receptor class CDC14 subfamily.

The protein localises to the endoplasmic reticulum membrane. The catalysed reaction is O-phospho-L-tyrosyl-[protein] + H2O = L-tyrosyl-[protein] + phosphate. The enzyme catalyses O-phospho-L-seryl-[protein] + H2O = L-seryl-[protein] + phosphate. It carries out the reaction O-phospho-L-threonyl-[protein] + H2O = L-threonyl-[protein] + phosphate. Functionally, dual-specificity phosphatase. Preferentially dephosphorylates proteins modified by proline-directed kinases. The protein is Dual specificity protein phosphatase CDC14C of Homo sapiens (Human).